The primary structure comprises 1358 residues: Indole-3-acetaldehyde oxidase (1358 aa).

One can recognise a 2Fe-2S ferredoxin-type domain in the interval Ser11–Ile98. Residues Cys50, Cys55, and Cys58 each coordinate [2Fe-2S] cluster. One can recognise an FAD-binding PCMH-type domain in the interval Ile241–Ser419. Residues Ser532–His559 are disordered. Over residues Asn537–Asp554 the composition is skewed to polar residues.

The protein belongs to the xanthine dehydrogenase family. In terms of assembly, aldehyde oxidases (AO) are homodimers and heterodimers of AO subunits. [2Fe-2S] cluster serves as cofactor. The cofactor is FAD. It depends on Mo-molybdopterin as a cofactor. Mostly expressed in roots, and, to a lower extent, in mesocotyl, leaves and coleoptile. Accumulates in apical region of maize coleoptiles (at protein level).

The protein localises to the cytoplasm. It catalyses the reaction indole-3-acetaldehyde + O2 + H2O = (indol-3-yl)acetate + H2O2 + H(+). Its activity is regulated as follows. Inhibited by 2-mercaptoethanol, p-chloromercuribenzoate, and iodoacetate. In terms of biological role, in higher plants aldehyde oxidases (AO) appear to be homo- and heterodimeric assemblies of AO subunits with probably different physiological functions. Involved in the biosynthesis of auxin from (indol-3-yl)acetaldehyde. Can also use indole-3-aldehyde and benzaldehyde as substrate. In Zea mays (Maize), this protein is Indole-3-acetaldehyde oxidase (AO1).